The primary structure comprises 451 residues: MKTITTFENKKVLVLGLARSGEAAARLLAKLGAIVTVNDGKPFDENPTAQSLLEEGIKVVCGSHPLELLDEDFCYMIKNPGIPYNNPMVKKALEKQIPVLTEVELAYLVSESQLIGITGSNGKTTTTTMIAEVLNAGGQRGLLAGNIGFPASEVVQAANDKDTLVMELSSFQLMGVKEFRPHIAVITNLMPTHLDYHGSFEDYVAAKWNIQNQMSSSDFLVLNFNQGISKELAKTTKATIVPFSTTEKVDGAYVQDKQLFYKGENIMSVDDIGVPGSHNVENALATIAVAKLAGISNQVIRETLSNFGGVKHRLQSLGKVHGISFYNDSKSTNILATQKALSGFDNTKVILIAGGLDRGNEFDELIPDITGLKHMVVLGESASRVKRAAQKAGVTYSDALDVRDAVHKAYEVAQQGDVILLSPANASWDMYKNFEVRGDEFIDTFESLRGE.

119–125 (GSNGKTT) contributes to the ATP binding site.

Belongs to the MurCDEF family.

Its subcellular location is the cytoplasm. The enzyme catalyses UDP-N-acetyl-alpha-D-muramoyl-L-alanine + D-glutamate + ATP = UDP-N-acetyl-alpha-D-muramoyl-L-alanyl-D-glutamate + ADP + phosphate + H(+). Its pathway is cell wall biogenesis; peptidoglycan biosynthesis. Cell wall formation. Catalyzes the addition of glutamate to the nucleotide precursor UDP-N-acetylmuramoyl-L-alanine (UMA). In Streptococcus agalactiae serotype Ia (strain ATCC 27591 / A909 / CDC SS700), this protein is UDP-N-acetylmuramoylalanine--D-glutamate ligase.